The sequence spans 292 residues: Phosphatidylserine decarboxylase proenzyme (292 aa).

Active-site charge relay system; for autoendoproteolytic cleavage activity residues include aspartate 89, histidine 146, and serine 252. Serine 252 (schiff-base intermediate with substrate; via pyruvic acid; for decarboxylase activity) is an active-site residue. Serine 252 is subject to Pyruvic acid (Ser); by autocatalysis.

It belongs to the phosphatidylserine decarboxylase family. PSD-B subfamily. Prokaryotic type I sub-subfamily. As to quaternary structure, heterodimer of a large membrane-associated beta subunit and a small pyruvoyl-containing alpha subunit. The cofactor is pyruvate. Is synthesized initially as an inactive proenzyme. Formation of the active enzyme involves a self-maturation process in which the active site pyruvoyl group is generated from an internal serine residue via an autocatalytic post-translational modification. Two non-identical subunits are generated from the proenzyme in this reaction, and the pyruvate is formed at the N-terminus of the alpha chain, which is derived from the carboxyl end of the proenzyme. The autoendoproteolytic cleavage occurs by a canonical serine protease mechanism, in which the side chain hydroxyl group of the serine supplies its oxygen atom to form the C-terminus of the beta chain, while the remainder of the serine residue undergoes an oxidative deamination to produce ammonia and the pyruvoyl prosthetic group on the alpha chain. During this reaction, the Ser that is part of the protease active site of the proenzyme becomes the pyruvoyl prosthetic group, which constitutes an essential element of the active site of the mature decarboxylase.

Its subcellular location is the cell membrane. It carries out the reaction a 1,2-diacyl-sn-glycero-3-phospho-L-serine + H(+) = a 1,2-diacyl-sn-glycero-3-phosphoethanolamine + CO2. It participates in phospholipid metabolism; phosphatidylethanolamine biosynthesis; phosphatidylethanolamine from CDP-diacylglycerol: step 2/2. In terms of biological role, catalyzes the formation of phosphatidylethanolamine (PtdEtn) from phosphatidylserine (PtdSer). This Shewanella baltica (strain OS185) protein is Phosphatidylserine decarboxylase proenzyme.